Consider the following 146-residue polypeptide: Acidic phospholipase A2 S5-32M (146 aa).

An N-terminal signal peptide occupies residues 1-19 (MYPAHLLVLLAVCVSLLGA). Residues 20-27 (ASIPPQPL) constitute a propeptide that is removed on maturation. 7 disulfide bridges follow: Cys-38-Cys-98, Cys-54-Cys-145, Cys-56-Cys-72, Cys-71-Cys-126, Cys-78-Cys-119, Cys-87-Cys-112, and Cys-105-Cys-117. Residues Tyr-55, Gly-57, and Gly-59 each contribute to the Ca(2+) site. His-75 is an active-site residue. Asp-76 contacts Ca(2+). The active site involves Asp-120.

The protein belongs to the phospholipase A2 family. Group I subfamily. D49 sub-subfamily. It depends on Ca(2+) as a cofactor. As to expression, expressed by the venom gland.

It is found in the secreted. It catalyses the reaction a 1,2-diacyl-sn-glycero-3-phosphocholine + H2O = a 1-acyl-sn-glycero-3-phosphocholine + a fatty acid + H(+). In terms of biological role, snake venom phospholipase A2 (PLA2) that inhibits collagen-induced platelet aggregation. PLA2 catalyzes the calcium-dependent hydrolysis of the 2-acyl groups in 3-sn-phosphoglycerides. The sequence is that of Acidic phospholipase A2 S5-32M from Austrelaps superbus (Lowland copperhead snake).